A 325-amino-acid polypeptide reads, in one-letter code: Phospholipid phosphatase-related protein type 1 (325 aa).

Helical transmembrane passes span 11–31 (YSIIPCFIFVELVIMAGTVLL), 67–87 (FISPLVLYCVLAATPTAIIFI), and 127–147 (FIGVFAFGLFATDIFVNAGQV). Asn-163 is a glycosylation site (N-linked (GlcNAc...) asparagine). 3 helical membrane passes run 201–218 (AALSIYSALYATMYITST), 230–247 (VLCLGTLCCAFLTGLNRV), and 257–277 (VIGGFILGTAIALFLGLCVVH). An N-linked (GlcNAc...) asparagine glycan is attached at Asn-316.

This sequence belongs to the PA-phosphatase related phosphoesterase family.

Its subcellular location is the cell membrane. It localises to the cell projection. The protein localises to the neuron projection. In terms of biological role, may play a role in neurite outgrowth and neurogenesis. This Xenopus tropicalis (Western clawed frog) protein is Phospholipid phosphatase-related protein type 1.